The primary structure comprises 211 residues: Cyclin-dependent kinase inhibitor 3 (211 aa).

The disordered stretch occupies residues 1–20; that stretch reads MKPPISIQASEFDSSDEEPV. The tract at residues 1 to 34 is interaction with CDK2; that stretch reads MKPPISIQASEFDSSDEEPVDEEQTPIQISWLPL. One can recognise a Tyrosine-protein phosphatase domain in the interval 32-200; the sequence is LPLSRVNCSQ…FRDKLAAYLS (169 aa). The Phosphocysteine intermediate role is filled by Cys140.

This sequence belongs to the protein-tyrosine phosphatase family. Interacts with cyclin-dependent kinases such as CDK1, CDK2 and CDK3. Does not interact with CDK4. Interacts (via C-terminus) with phosphorylated CDK2 (via C-terminal helix). Interacts with MS4A3 (via C-terminus); the interaction enhances CDKN3 enzymatic activity.

The protein localises to the cytoplasm. It localises to the perinuclear region. It carries out the reaction O-phospho-L-tyrosyl-[protein] + H2O = L-tyrosyl-[protein] + phosphate. It catalyses the reaction O-phospho-L-seryl-[protein] + H2O = L-seryl-[protein] + phosphate. The catalysed reaction is O-phospho-L-threonyl-[protein] + H2O = L-threonyl-[protein] + phosphate. Its function is as follows. May play a role in cell cycle regulation. Dual specificity phosphatase active toward substrates containing either phosphotyrosine or phosphoserine residues. Dephosphorylates CDK2 at 'Thr-160' in a cyclin-dependent manner. In Mus musculus (Mouse), this protein is Cyclin-dependent kinase inhibitor 3.